The sequence spans 101 residues: Small ribosomal subunit protein uS14 (101 aa).

Over residues 1-10 (MAKKSSVEKN) the composition is skewed to basic and acidic residues. The interval 1-23 (MAKKSSVEKNNRRKRMAKNAAPK) is disordered. Residues 11–23 (NRRKRMAKNAAPK) are compositionally biased toward basic residues.

The protein belongs to the universal ribosomal protein uS14 family. In terms of assembly, part of the 30S ribosomal subunit. Contacts proteins S3 and S10.

In terms of biological role, binds 16S rRNA, required for the assembly of 30S particles and may also be responsible for determining the conformation of the 16S rRNA at the A site. This Bradyrhizobium sp. (strain BTAi1 / ATCC BAA-1182) protein is Small ribosomal subunit protein uS14.